Consider the following 67-residue polypeptide: MHIKHQAVLELLKYYKLKISFIIFFFFYFFFFYFFYGFWNLNKKKKFFYKTVKNSIGQVILRDMSNN.

Residues 19-39 (ISFIIFFFFYFFFFYFFYGFW) form a helical membrane-spanning segment.

The protein localises to the membrane. This is an uncharacterized protein from Dictyostelium discoideum (Social amoeba).